Consider the following 279-residue polypeptide: ATP synthase gamma chain (279 aa).

This sequence belongs to the ATPase gamma chain family. As to quaternary structure, F-type ATPases have 2 components, CF(1) - the catalytic core - and CF(0) - the membrane proton channel. CF(1) has five subunits: alpha(3), beta(3), gamma(1), delta(1), epsilon(1). CF(0) has three main subunits: a, b and c.

Its subcellular location is the cell membrane. Produces ATP from ADP in the presence of a proton gradient across the membrane. The gamma chain is believed to be important in regulating ATPase activity and the flow of protons through the CF(0) complex. The sequence is that of ATP synthase gamma chain from Mycoplasma genitalium (strain ATCC 33530 / DSM 19775 / NCTC 10195 / G37) (Mycoplasmoides genitalium).